Consider the following 205-residue polypeptide: Transcriptional regulator GfcR (205 aa).

This sequence belongs to the purine/pyrimidine phosphoribosyltransferase family. GfcR subfamily.

This chain is Transcriptional regulator GfcR, found in Methanococcus maripaludis (strain C7 / ATCC BAA-1331).